A 208-amino-acid polypeptide reads, in one-letter code: RNA chaperone ProQ (208 aa).

Composition is skewed to basic and acidic residues over residues Ala-99 to Lys-115 and Pro-126 to Ala-135. The disordered stretch occupies residues Ala-99–Lys-149. Over residues Ala-137–Lys-149 the composition is skewed to basic residues.

It belongs to the ProQ family.

It localises to the cytoplasm. In terms of biological role, RNA chaperone with significant RNA binding, RNA strand exchange and RNA duplexing activities. This chain is RNA chaperone ProQ, found in Idiomarina loihiensis (strain ATCC BAA-735 / DSM 15497 / L2-TR).